Reading from the N-terminus, the 142-residue chain is SPbeta prophage-derived deoxyuridine 5'-triphosphate nucleotidohydrolase YosS (142 aa).

The dUMP site is built by S62 and N74. Residue D80 is the Proton acceptor of the active site. 2 residues coordinate dUMP: Y83 and F91.

It belongs to the dUTPase family. In terms of assembly, homotrimer. Mg(2+) serves as cofactor.

The catalysed reaction is dUTP + H2O = dUMP + diphosphate + H(+). The protein operates within pyrimidine metabolism; dUMP biosynthesis; dUMP from dCTP (dUTP route): step 2/2. In terms of biological role, involved in nucleotide metabolism: produces dUMP, the immediate precursor of thymidine nucleotides and decreases the intracellular concentration of dUTP, so that uracil cannot be incorporated into DNA. The Ser-62 side chain changes its position upon ligand-binding to make contacts with the nucleotide phosphates. The sequence is that of SPbeta prophage-derived deoxyuridine 5'-triphosphate nucleotidohydrolase YosS from Bacillus subtilis (strain 168).